The chain runs to 569 residues: MAASSLSLSSPLSNPLRRFTLHHLHLSKKPLSSSSLFLCSAAKMNDHIHRVPALTEEEIDSVAIKTFERYALPSSSSVKRKGKGVTILWFRNDLRVLDNDALYKAWSSSDTILPVYCLDPRLFHTTHFFNFPKTGALRGGFLMECLVDLRKNLMKRGLNLLIRSGKPEEILPSLAKDFGARTVFAHKETCSEEVDVERLVNQGLKRVGNSTKLELIWGSTMYHKDDLPFDVFDLPDVYTQFRKSVEAKCSIRSSTRIPLSLGPTPSVDDWGDVPTLEKLGVEPQEVTRGMRFVGGESAGVGRVFEYFWKKDLLKVYKETRNGMLGPDYSTKFSPWLAFGCISPRFIYEEVQRYEKERVANNSTYWVLFELIWRDYFRFLSIKCGNSLFHLGGPRNVQGKWSQDQKLFESWRDAKTGYPLIDANMKELSTTGFMSNRGRQIVCSFLVRDMGLDWRMGAEWFETCLLDYDPCSNYGNWTYGAGVGNDPREDRYFSIPKQAQNYDPEGEYVAFWLQQLRRLPKEKRHWPGRLMYMDTVVPLKHGNGPMAGGSKSGGGFRGSHSGRRSRHNGP.

A Photolyase/cryptochrome alpha/beta domain is found at 84 to 221 (GVTILWFRND…KLELIWGSTM (138 aa)). Residues tyrosine 316 and 329–333 (STKFS) contribute to the FAD site. Arginine 436 is a binding site for ATP. FAD-binding residues include aspartate 466 and aspartate 468. Aspartate 485 contacts ATP. The disordered stretch occupies residues 541 to 569 (GNGPMAGGSKSGGGFRGSHSGRRSRHNGP). Residues 544 to 556 (PMAGGSKSGGGFR) are compositionally biased toward gly residues. Residues 559 to 569 (HSGRRSRHNGP) show a composition bias toward basic residues.

It belongs to the DNA photolyase class-1 family. Homodimer. FAD serves as cofactor. It depends on (6R)-5,10-methylene-5,6,7,8-tetrahydrofolate as a cofactor.

It is found in the plastid. Its subcellular location is the chloroplast. The protein localises to the mitochondrion. May have a photoreceptor function. Binds ss- and ds-DNA in a sequence non-specific manner. Has a photolyase activity specific for cyclobutane pyrimidine dimers in ssDNA. The sequence is that of Cryptochrome DASH, chloroplastic/mitochondrial (CRYD) from Arabidopsis thaliana (Mouse-ear cress).